We begin with the raw amino-acid sequence, 447 residues long: Phospholipase A(1) DAD1, chloroplastic (447 aa).

Residues 1-46 constitute a chloroplast transit peptide; sequence MRFSLSPVRPHSVVVPSLPKQDVVSYISGTTSNRQCRCVLTLPSPS. The GXSXG signature appears at 293-297; that stretch reads GHSLG. Residue serine 295 is the Acyl-ester intermediate of the active site. Catalysis depends on charge relay system residues aspartate 352 and histidine 418.

The protein belongs to the AB hydrolase superfamily. Lipase family. Expressed in flower buds, but not in leaves or roots. Restricted to the stamen filaments immediately before flower opening.

The protein localises to the plastid. It is found in the chloroplast. It carries out the reaction a 1,2-diacyl-sn-glycero-3-phosphocholine + H2O = a 2-acyl-sn-glycero-3-phosphocholine + a fatty acid + H(+). It catalyses the reaction 1-hexadecanoyl-2-(9Z,12Z-octadecadienoyl)-sn-glycero-3-phosphocholine + H2O = 2-(9Z,12Z-octadecadienoyl)-sn-glycero-3-phosphocholine + hexadecanoate + H(+). Functionally, sn-1-specific phospholipase that releases free fatty acids from phospholipids. Low activity on galactolipids and triacylglycerols. Catalyzes the initial step of jasmonic acid biosynthesis. Not essential for jasmonate biosynthesis after wounding or upon pathogen infection. This chain is Phospholipase A(1) DAD1, chloroplastic, found in Arabidopsis thaliana (Mouse-ear cress).